The chain runs to 520 residues: Glucose-1-phosphate adenylyltransferase small subunit, chloroplastic (520 aa).

The transit peptide at 1 to 71 (MASVSAIGVL…RNPIIVSPKA (71 aa)) directs the protein to the chloroplast.

This sequence belongs to the bacterial/plant glucose-1-phosphate adenylyltransferase family. Heterotetramer. As to expression, leaves.

The protein resides in the plastid. It is found in the chloroplast. It catalyses the reaction alpha-D-glucose 1-phosphate + ATP + H(+) = ADP-alpha-D-glucose + diphosphate. It functions in the pathway glycan biosynthesis; starch biosynthesis. Its activity is regulated as follows. Activated by 3'phosphoglycerate, inhibited by orthophosphate. Allosteric regulation. Functionally, this protein plays a role in synthesis of starch. It catalyzes the synthesis of the activated glycosyl donor, ADP-glucose from Glc-1-P and ATP. The sequence is that of Glucose-1-phosphate adenylyltransferase small subunit, chloroplastic (APS1) from Arabidopsis thaliana (Mouse-ear cress).